Here is a 606-residue protein sequence, read N- to C-terminus: UvrABC system protein C (606 aa).

Residues 18–96 (SQPGVYRMMN…IKSLNPRYNI (79 aa)) form the GIY-YIG domain. The region spanning 205–240 (TEVLKSITRKMHEAAEEQEYEQAALFRDQIQSLRKI) is the UVR domain.

This sequence belongs to the UvrC family. As to quaternary structure, interacts with UvrB in an incision complex.

It localises to the cytoplasm. In terms of biological role, the UvrABC repair system catalyzes the recognition and processing of DNA lesions. UvrC both incises the 5' and 3' sides of the lesion. The N-terminal half is responsible for the 3' incision and the C-terminal half is responsible for the 5' incision. This is UvrABC system protein C from Nitrosospira multiformis (strain ATCC 25196 / NCIMB 11849 / C 71).